Reading from the N-terminus, the 391-residue chain is Nucleosome assembly protein 1-like 1 (391 aa).

Over residues 1 to 10 (MADIDNKEQS) the composition is skewed to basic and acidic residues. Positions 1 to 32 (MADIDNKEQSELDQDLEDVEEVEEEETGEETK) are disordered. A2 carries the N-acetylalanine modification. S10 is modified (phosphoserine). Over residues 11 to 28 (ELDQDLEDVEEVEEEETG) the composition is skewed to acidic residues. 2 positions are modified to phosphothreonine: T62 and T64. S69 carries the phosphoserine modification. N6-acetyllysine is present on K116. The NAP1L motif motif lies at 125–150 (YEPTEEECEWKPDEEDEVSEELKEKA). Acidic residues predominate over residues 131 to 143 (ECEWKPDEEDEVS). Residues 131–163 (ECEWKPDEEDEVSEELKEKAKIEDEKKDEEKED) form a disordered region. At S143 the chain carries Phosphoserine. Residues 144–163 (EELKEKAKIEDEKKDEEKED) are compositionally biased toward basic and acidic residues. The short motif at 273–279 (IKKKQKH) is the Nuclear localization signal element. Acidic residues predominate over residues 346–376 (AIEDDDDDYDEEGEEADEEGEEEGDEENDPD). The tract at residues 346–391 (AIEDDDDDYDEEGEEADEEGEEEGDEENDPDYDPKKDQNPAECKQQ) is disordered. 5-glutamyl polyglycine occurs at positions 359 and 360. Basic and acidic residues predominate over residues 377–391 (YDPKKDQNPAECKQQ). The residue at position 388 (C388) is a Cysteine methyl ester. A lipid anchor (S-farnesyl cysteine) is attached at C388. The propeptide at 389 to 391 (KQQ) is removed in mature form.

Belongs to the nucleosome assembly protein (NAP) family. In terms of assembly, homodimer. The dimer binds strongly and sequentially to single and double H2A-H2B heterodimers. Interacts with ERCC6; this interaction increases ERCC6 processivity. Interacts with RAD54. Interacts with SETD1A. In terms of processing, polyglycylated by TTLL10 on glutamate residues, resulting in polyglycine chains on the gamma-carboxyl group. Both polyglutamylation and polyglycylation modifications can coexist on the same protein on adjacent residues, and lowering polyglycylation levels increases polyglutamylation, and reciprocally. Polyglutamylated by TTLL4 on glutamate residues, resulting in polyglutamate chains on the gamma-carboxyl group. Both polyglutamylation and polyglycylation modifications can coexist on the same protein on adjacent residues, and lowering polyglycylation levels increases polyglutamylation, and reciprocally. Highly expressed in the brain (at protein level). High expression in cerebral cortex, not in cerebellar cortex.

Its subcellular location is the nucleus. The protein resides in the cytoplasm. It localises to the melanosome. Histone chaperone that plays a role in the nuclear import of H2A-H2B and nucleosome assembly. Also participates in several important DNA repair mechanisms: greatly enhances ERCC6-mediated chromatin remodeling which is essential for transcription-coupled nucleotide excision DNA repair. Also stimulates homologous recombination (HR) by RAD51 and RAD54 which is essential in mitotic DNA double strand break (DSB) repair. Plays a key role in the regulation of embryonic neurogenesis. Promotes the proliferation of neural progenitors and inhibits neuronal differentiation during cortical development. Regulates neurogenesis via the modulation of RASSF10; regulates RASSF10 expression by promoting SETD1A-mediated H3K4 methylation at the RASSF10 promoter. This chain is Nucleosome assembly protein 1-like 1 (Nap1l1), found in Mus musculus (Mouse).